Here is a 115-residue protein sequence, read N- to C-terminus: MNFVLILMTNTLLALLLMIITFWLPQLNSYMEKSTPYECGFDPMSPARVPFSMKFFLVAITFLLFDLEIALLLPLPWALQTANLPLMVTSSLLLITILALSLAYEWLQKGLDWTE.

3 helical membrane passes run 3-23, 55-75, and 84-104; these read FVLI…ITFW, FFLV…LLPL, and LPLM…SLAY.

The protein belongs to the complex I subunit 3 family. In terms of assembly, core subunit of respiratory chain NADH dehydrogenase (Complex I) which is composed of 45 different subunits. Interacts with TMEM186. Interacts with TMEM242.

The protein localises to the mitochondrion inner membrane. The catalysed reaction is a ubiquinone + NADH + 5 H(+)(in) = a ubiquinol + NAD(+) + 4 H(+)(out). Functionally, core subunit of the mitochondrial membrane respiratory chain NADH dehydrogenase (Complex I) which catalyzes electron transfer from NADH through the respiratory chain, using ubiquinone as an electron acceptor. Essential for the catalytic activity of complex I. This is NADH-ubiquinone oxidoreductase chain 3 from Pan troglodytes (Chimpanzee).